Reading from the N-terminus, the 483-residue chain is Cobyric acid synthase (483 aa).

Residues 251–438 enclose the GATase cobBQ-type domain; the sequence is ALIVAVPMLP…LHGVFSADRF (188 aa). C333 (nucleophile) is an active-site residue. H430 is an active-site residue.

Belongs to the CobB/CobQ family. CobQ subfamily.

It participates in cofactor biosynthesis; adenosylcobalamin biosynthesis. In terms of biological role, catalyzes amidations at positions B, D, E, and G on adenosylcobyrinic A,C-diamide. NH(2) groups are provided by glutamine, and one molecule of ATP is hydrogenolyzed for each amidation. The protein is Cobyric acid synthase of Brucella suis biovar 1 (strain 1330).